We begin with the raw amino-acid sequence, 794 residues long: Solute carrier family 26 member 9 (794 aa).

At Met-1 to Asn-70 the chain is on the cytoplasmic side. A helical membrane pass occupies residues Leu-71–Ala-96. Over Asn-97–Pro-100 the chain is Extracellular. A helical transmembrane segment spans residues Val-101–Phe-109. Over Pro-110 to Ala-129 the chain is Cytoplasmic. The helical transmembrane segment at Val-130–Leu-142 threads the bilayer. The Extracellular segment spans residues Ala-143 to Ile-160. The helical transmembrane segment at Glu-161–Gln-189 threads the bilayer. Residues Phe-190–Glu-199 are Cytoplasmic-facing. The helical transmembrane segment at Ser-200–Phe-222 threads the bilayer. Residues Gly-223 to Ile-235 are Extracellular-facing. Residues Ile-236–Lys-244 constitute an intramembrane region (helical). Residues Glu-245 to Ala-252 lie on the Extracellular side of the membrane. A helical transmembrane segment spans residues Ser-253–Lys-273. The Cytoplasmic segment spans residues Phe-274–Met-284. A helical transmembrane segment spans residues Glu-285–Gly-297. Over Ser-298–Val-332 the chain is Extracellular. A helical membrane pass occupies residues Gly-333–Lys-356. The Cytoplasmic segment spans residues His-357 to Ala-363. The helical transmembrane segment at Asn-364 to Gly-377 threads the bilayer. The Extracellular segment spans residues Ser-378–Ala-388. The helical transmembrane segment at Leu-389–Ala-398 threads the bilayer. Over Gly-399–Gln-403 the chain is Cytoplasmic. Residues Ile-404–Ile-417 traverse the membrane as a helical segment. The Extracellular portion of the chain corresponds to Leu-418–Lys-429. The helical transmembrane segment at Ser-430–Lys-455 threads the bilayer. Residues Lys-456–Leu-459 are Cytoplasmic-facing. The chain crosses the membrane as a helical span at residues Asp-460 to Leu-474. At Gly-475–Pro-477 the chain is on the extracellular side. Residues Tyr-478–Gln-496 form a helical membrane-spanning segment. At Phe-497 to Leu-794 the chain is on the cytoplasmic side. The STAS domain occupies Val-517–Ala-739.

Belongs to the SLC26A/SulP transporter (TC 2.A.53) family. Homodimer.

It localises to the cell membrane. The protein resides in the endomembrane system. The enzyme catalyses chloride(in) = chloride(out). It catalyses the reaction hydrogencarbonate(in) + chloride(out) = hydrogencarbonate(out) + chloride(in). Its activity is regulated as follows. Inhibited by ammonium and thiosulfate. Its function is as follows. Ion transporter that can act both as an ion channel and anion exchanger. Mainly acts as a chloride channel, which mediate uncoupled chloride anion transport in an alternate-access mechanism where a saturable binding site is alternately exposed to either one or the other side of the membrane. Also acts as a DIDS- and thiosulfate- sensitive anion exchanger the exchange of chloride for bicarbonate ions across the cell membrane. This chain is Solute carrier family 26 member 9 (slc26a9), found in Xenopus tropicalis (Western clawed frog).